The following is a 162-amino-acid chain: Caveolin-2 (162 aa).

The Cytoplasmic segment spans residues 1–86 (MGLETEKADV…FEISKYVIYK (86 aa)). Tyr-19 is modified (phosphotyrosine; by SRC). Phosphoserine is present on residues Ser-20 and Ser-23. Tyr-27 is subject to Phosphotyrosine; by SRC. At Ser-36 the chain carries Phosphoserine. Positions 87–107 (FLTVFLAIPLAFTAGILFATL) form an intramembrane region, helical. The Cytoplasmic segment spans residues 108–162 (SCLHIWIIMPFVKTCLMVLPSVQTIWRSVTDVIIAPLCTSIGRICSSVSLQVSHD).

The protein belongs to the caveolin family. In terms of assembly, monomer or homodimer. Interacts with CAV1; the interaction forms a stable heterooligomeric complex that is required for targeting to lipid rafts and for caveolae formation. Tyrosine phosphorylated forms do not form heterooligomers with the Tyr-19-phosphorylated form existing as a monomer or dimer, and the Tyr-27-form as a monomer only. Interacts (tyrosine phosphorylated form) with the SH2 domain-containing proteins, RASA1, NCK1 and SRC. Interacts (tyrosine phosphorylated form) with INSR, the interaction (Tyr-27-phosphorylated form) is increased on insulin stimulation. Interacts (Tyr-19 phosphorylated form) with MAPK1 (phosphorylated form); the interaction, promoted by insulin, leads to nuclear location and MAPK1 activation. Interacts with STAT3; the interaction is increased on insulin-induced tyrosine phosphorylation leading to STAT activation. Post-translationally, phosphorylated on serine and tyrosine residues. CAV1 promotes phosphorylation on Ser-23 which then targets the complex to the plasma membrane, lipid rafts and caveolae. Phosphorylation on Ser-36 appears to modulate mitosis in endothelial cells. Phosphorylation on both Tyr-19 and Tyr-27 is required for insulin-induced 'Ser-727' phosphorylation of STAT3 and its activation. Phosphorylation on Tyr-19 is required for insulin-induced phosphorylation of MAPK1 and DNA binding of STAT3. Tyrosine phosphorylation is induced by both EGF and insulin (By. similarity).

The protein localises to the nucleus. It is found in the cytoplasm. The protein resides in the golgi apparatus membrane. It localises to the cell membrane. Its subcellular location is the membrane. The protein localises to the caveola. May act as a scaffolding protein within caveolar membranes. Interacts directly with G-protein alpha subunits and can functionally regulate their activity. Acts as an accessory protein in conjunction with CAV1 in targeting to lipid rafts and driving caveolae formation. The Ser-36 phosphorylated form has a role in modulating mitosis in endothelial cells. Positive regulator of cellular mitogenesis of the MAPK signaling pathway. Required for the insulin-stimulated nuclear translocation and activation of MAPK1 and STAT3, and the subsequent regulation of cell cycle progression. The protein is Caveolin-2 (CAV2) of Atelerix albiventris (Middle-African hedgehog).